We begin with the raw amino-acid sequence, 110 residues long: U-scoloptoxin(16)-Er7a (110 aa).

Positions 1-26 (MTSTRKLSVSCLIVFMVSSLIAVSSG) are cleaved as a signal peptide.

Belongs to the scoloptoxin-16 family. Contains 4 disulfide bonds. Expressed by the venom gland.

The protein resides in the secreted. In Ethmostigmus rubripes (Giant centipede), this protein is U-scoloptoxin(16)-Er7a.